Reading from the N-terminus, the 490-residue chain is MSRMAEQQLYIHGGCTSATSGRTFETINPANGNVLATVQAAGREDVDRAVKSAQQGQKIWAAMTAMERSRILRRAVDILRERNDELAKLETLDTGKAYSETSTVDIVTGADVLEYYAGLIPALEGSQIPLRETSFVYTRHEPLGVVAGIGAWNYPIQIALWKSAPALAAGNAMIFKPSEVTPLTALKLAEIYSEAGLPDGVFNVLPGVGAETGQYLTEHPGIAKVSFTGGVASGKKVMANSAASSLKEVTMELGGKSPLIVFDDADLDLAADIAMMANFFSSGQVCTNGTRVFIPTKCKAAFEQKILARVERIRAGDVFDPQTNFGPLVSFPHRDNVLRYIAKGKEEGARVLCGGDVLKGDSFDNGAWVAPTVFTDCSDDMTIVREEIFGPVMSILTYESEDEVIRRANDTDYGLAAGIVTADLNRAHRVIHQLEAGICWINTWGESPAEMPVGGYKHSGIGRENGVMTLQSYTQVKSIQVEMAKFQSIF.

The K(+) site is built by T26, I27, and D93. Residue 150–152 participates in NAD(+) binding; that stretch reads GAW. K162 serves as the catalytic Charge relay system. 176–179 is a binding site for NAD(+); sequence KPSE. V180 lines the K(+) pocket. An NAD(+)-binding site is contributed by 230–233; that stretch reads GVAS. Residue L246 coordinates K(+). Residue E252 is the Proton acceptor of the active site. 3 residues coordinate NAD(+): G254, C286, and E387. C286 (nucleophile) is an active-site residue. The residue at position 286 (C286) is a Cysteine sulfenic acid (-SOH). K457 and G460 together coordinate K(+). Residue E464 is the Charge relay system of the active site.

This sequence belongs to the aldehyde dehydrogenase family. Dimer of dimers. K(+) serves as cofactor.

It carries out the reaction betaine aldehyde + NAD(+) + H2O = glycine betaine + NADH + 2 H(+). It functions in the pathway amine and polyamine biosynthesis; betaine biosynthesis via choline pathway; betaine from betaine aldehyde: step 1/1. Its function is as follows. Involved in the biosynthesis of the osmoprotectant glycine betaine. Catalyzes the irreversible oxidation of betaine aldehyde to the corresponding acid. The protein is Betaine aldehyde dehydrogenase of Escherichia coli O7:K1 (strain IAI39 / ExPEC).